We begin with the raw amino-acid sequence, 255 residues long: Phosphate import ATP-binding protein PstB (255 aa).

The 242-residue stretch at 9-250 (MYAQGLQFYY…PRNKQTEDYI (242 aa)) folds into the ABC transporter domain. 41-48 (GPSGCGKS) lines the ATP pocket.

It belongs to the ABC transporter superfamily. Phosphate importer (TC 3.A.1.7) family. The complex is composed of two ATP-binding proteins (PstB), two transmembrane proteins (PstC and PstA) and a solute-binding protein (PstS).

The protein resides in the cell inner membrane. The enzyme catalyses phosphate(out) + ATP + H2O = ADP + 2 phosphate(in) + H(+). Functionally, part of the ABC transporter complex PstSACB involved in phosphate import. Responsible for energy coupling to the transport system. The protein is Phosphate import ATP-binding protein PstB of Nitratidesulfovibrio vulgaris (strain ATCC 29579 / DSM 644 / CCUG 34227 / NCIMB 8303 / VKM B-1760 / Hildenborough) (Desulfovibrio vulgaris).